We begin with the raw amino-acid sequence, 424 residues long: Phosphomethylpyrimidine synthase (424 aa).

Substrate is bound by residues N66, M95, Y124, H163, 185 to 187, 226 to 229, and E265; these read SRG and DGMR. H269 is a Zn(2+) binding site. F292 is a substrate binding site. Residue H333 coordinates Zn(2+). Residues C408, C411, and C415 each coordinate [4Fe-4S] cluster.

This sequence belongs to the ThiC family. It depends on [4Fe-4S] cluster as a cofactor.

It catalyses the reaction 5-amino-1-(5-phospho-beta-D-ribosyl)imidazole + S-adenosyl-L-methionine = 4-amino-2-methyl-5-(phosphooxymethyl)pyrimidine + CO + 5'-deoxyadenosine + formate + L-methionine + 3 H(+). It participates in cofactor biosynthesis; thiamine diphosphate biosynthesis. In terms of biological role, catalyzes the synthesis of the hydroxymethylpyrimidine phosphate (HMP-P) moiety of thiamine from aminoimidazole ribotide (AIR) in a radical S-adenosyl-L-methionine (SAM)-dependent reaction. This chain is Phosphomethylpyrimidine synthase, found in Thermotoga sp. (strain RQ2).